The chain runs to 170 residues: Ankyrin repeat-containing protein C105.02c (170 aa).

ANK repeat units lie at residues 46 to 76 (LGND…NLNN) and 81 to 116 (TGDT…DPLL). The tract at residues 150 to 170 (SADVVADDDDEEEGSGESDEE) is disordered. A compositionally biased stretch (acidic residues) spans 154 to 170 (VADDDDEEEGSGESDEE).

The protein localises to the cytoplasm. It localises to the nucleus. The polypeptide is Ankyrin repeat-containing protein C105.02c (Schizosaccharomyces pombe (strain 972 / ATCC 24843) (Fission yeast)).